A 163-amino-acid chain; its full sequence is Putative 4-hydroxy-4-methyl-2-oxoglutarate aldolase (163 aa).

Residues 76-79 and R98 each bind substrate; that span reads GDML. D99 contributes to the a divalent metal cation binding site.

Belongs to the class II aldolase/RraA-like family. In terms of assembly, homotrimer. A divalent metal cation is required as a cofactor.

The catalysed reaction is 4-hydroxy-4-methyl-2-oxoglutarate = 2 pyruvate. It catalyses the reaction oxaloacetate + H(+) = pyruvate + CO2. Catalyzes the aldol cleavage of 4-hydroxy-4-methyl-2-oxoglutarate (HMG) into 2 molecules of pyruvate. Also contains a secondary oxaloacetate (OAA) decarboxylase activity due to the common pyruvate enolate transition state formed following C-C bond cleavage in the retro-aldol and decarboxylation reactions. This is Putative 4-hydroxy-4-methyl-2-oxoglutarate aldolase from Pseudomonas putida (strain GB-1).